We begin with the raw amino-acid sequence, 487 residues long: MFRRALRLGLGPGLPYRGLRTRKGGFTLDWDAKVSDFKKKVDSILPGKKYEVLYDTSHLPPEQADVVIIGGGILGLSVAFWLKKLESRRGAIRVLVVEQDHTYSRASSTGPSVGGIWQQFSVPENVQLSLFSINFLRNINEYLAVVDAPPVELQFNPSGCLLLASEKDAATLENNVKMQRQEGAKVCLMSPEQLQTKFPWINVEGVALASYGLEDEGWFDAWSLLQGLRRKVQSMGVFFCQGEVTRFITSSTPMKTPTGEHVVLRRINNVHVKMDKSLEYQPVECAVVINAAGAWSGKIAELAGVGKGLPGTLQGTKLPVEPRKRYVHLWHCPQGPGLETPLVADISGVYFRREGLGSNYLGGCSPTEEEEPDPTNLNVDHDFFQNKVWPHLVQRVPSFKTLEVQSAWAGYYDYNTFDQNGVVGPHPLVVNMYFATGFSGRGLQHAPGIGRAVAEIMLEGHFKTIDMSPFLFTRFYLGEKLQEYNIL.

A helical transmembrane segment spans residues Glu62–Leu82.

As to quaternary structure, associates with components of the mitochondrial respiratory chain complex I. It depends on FAD as a cofactor.

It localises to the mitochondrion inner membrane. Required for the assembly of the mitochondrial membrane respiratory chain NADH dehydrogenase (Complex I). Involved in mid-late stages of complex I assembly. This is FAD-dependent oxidoreductase domain-containing protein 1 (Foxred1) from Mus musculus (Mouse).